We begin with the raw amino-acid sequence, 411 residues long: MISKLKMPQPTVNIGMVGHVDHGKSTLTLALTGVKTDTHSEEIKRGISIKLGYADTPVYKCYDASGNPYYTRQPSENCELERVISIVDAPGHETLMATMLSGSALMNGALLVIAANEHCPQPQTREHLTALEIMGIKNIVIVQNKIDLVTRERALESYKEIKAFVKGSIAENAPIIPVSAYHNTNIDILFEAIEKYIPTPEYNEGSDPIMYIARSFDVNKPGTPIDQIKGGIIGGSLTQGSLKIGDEIEIVPGIQNTRGNKTVWTNVTTEVVSLMAGKYSYDMIKPGGLAAVGTKLDPFLTKGDAFTGRIAGYIGKVPPISFSMRLEAHLLKRVVGSDQELNVEPIRAKETLMFTVATANTVGVVSNVKGTDIEVSLKYPVAAFNGMRVAIGRRVLNRWRLIGYGVIESLE.

The tr-type G domain maps to Q9–E201. The segment at G18 to S25 is G1. The Mg(2+) site is built by D21, S25, G46, and S48. D21–T26 lines the GTP pocket. Positions G46 to K50 are G2. The tract at residues D88 to G91 is G3. GTP-binding positions include N144–D147 and S179–Y181. The interval N144 to D147 is G4. Positions S179 to Y181 are G5.

It belongs to the TRAFAC class translation factor GTPase superfamily. Classic translation factor GTPase family. EIF2G subfamily. Heterotrimer composed of an alpha, a beta and a gamma chain. Mg(2+) is required as a cofactor.

The enzyme catalyses GTP + H2O = GDP + phosphate + H(+). Functionally, eIF-2 functions in the early steps of protein synthesis by forming a ternary complex with GTP and initiator tRNA. The chain is Translation initiation factor 2 subunit gamma from Thermoplasma volcanium (strain ATCC 51530 / DSM 4299 / JCM 9571 / NBRC 15438 / GSS1).